We begin with the raw amino-acid sequence, 460 residues long: Probable lipid II flippase MurJ (460 aa).

11 consecutive transmembrane segments (helical) span residues 4–24 (ILGA…PNLF), 50–70 (FASL…LLVA), 95–115 (IVAI…LGAL), 122–142 (FFAS…ALLI), 155–175 (LSYG…YPLV), 228–248 (IASF…VSYL), 257–277 (LPLA…IAIA), 292–312 (KAWF…IMLS), 336–356 (VFSL…FSLW), 366–386 (AAKI…SLMP), and 428–448 (LVIL…KSWV).

The protein belongs to the MurJ/MviN family.

The protein resides in the cell inner membrane. It participates in cell wall biogenesis; peptidoglycan biosynthesis. Involved in peptidoglycan biosynthesis. Transports lipid-linked peptidoglycan precursors from the inner to the outer leaflet of the cytoplasmic membrane. The polypeptide is Probable lipid II flippase MurJ (Helicobacter pylori (strain J99 / ATCC 700824) (Campylobacter pylori J99)).